Here is a 209-residue protein sequence, read N- to C-terminus: Protein TIFY 11c (209 aa).

Positions 93–128 (EITEKAQLTIFYGGSVVVFDDFPAEKAGELMKLAGS) constitute a Tify domain. Positions 153–177 (PIARKVSLQRFLEKRKNRIVVAEPL) match the Jas motif. The short motif at 155-162 (ARKVSLQR) is the Nuclear localization signal element. Positions 175 to 209 (EPLPESEKKEAESSKRAKKDDGGASWLQVNPTLSL) are disordered. A compositionally biased stretch (basic and acidic residues) spans 179–196 (ESEKKEAESSKRAKKDDG).

It belongs to the TIFY/JAZ family. In terms of processing, ubiquitinated. Targeted for degradation by the SCF(COI1) E3 ubiquitin ligase-proteasome pathway during jasmonate signaling.

The protein localises to the nucleus. Its function is as follows. Repressor of jasmonate responses. This Oryza sativa subsp. indica (Rice) protein is Protein TIFY 11c.